An 83-amino-acid polypeptide reads, in one-letter code: Small ribosomal subunit protein uS17 (83 aa).

Belongs to the universal ribosomal protein uS17 family. In terms of assembly, part of the 30S ribosomal subunit.

Its function is as follows. One of the primary rRNA binding proteins, it binds specifically to the 5'-end of 16S ribosomal RNA. This chain is Small ribosomal subunit protein uS17, found in Aliarcobacter butzleri (strain RM4018) (Arcobacter butzleri).